We begin with the raw amino-acid sequence, 259 residues long: UPF0246 protein PputW619_0896 (259 aa).

Belongs to the UPF0246 family.

The protein is UPF0246 protein PputW619_0896 of Pseudomonas putida (strain W619).